Consider the following 822-residue polypeptide: Fibroblast growth factor receptor 4 (822 aa).

Residues 1-35 form the signal peptide; that stretch reads MGVQKDSRDIRWNRTTRPLALLLCGLLAFSALSCA. N-linked (GlcNAc...) asparagine glycosylation is found at Asn13, Asn72, and Asn125. At 36-388 the chain is on the extracellular side; sequence RTLPEGRKAN…AEGPETRYTD (353 aa). 3 Ig-like C2-type domains span residues 39–129, 157–259, and 268–368; these read PEGR…FTIS, PPYS…YLLD, and PILQ…AWLT. The cysteines at positions 69 and 114 are disulfide-linked. Positions 136–166 are disordered; that stretch reads SGDDDDEDHGREDSAGDMGEDPPYSTSYRAP. A disulfide bridge links Cys191 with Cys243. 5 N-linked (GlcNAc...) asparagine glycosylation sites follow: Asn240, Asn277, Asn309, Asn330, and Asn341. Cys290 and Cys352 are joined by a disulfide. A helical membrane pass occupies residues 389–409; the sequence is IIIYTSGSLALLMAAVIVVLC. Residues 410 to 822 lie on the Cytoplasmic side of the membrane; the sequence is RMQLPPTKTH…HHTTTSMVGT (413 aa). The Protein kinase domain maps to 486–774; that stretch reads LVLGKPLGEG…ILATVAEEYL (289 aa). ATP contacts are provided by residues 492-500 and Lys522; that span reads LGEGCFGQV. Asp631 (proton acceptor) is an active-site residue. Phosphotyrosine; by autocatalysis is present on residues Tyr661, Tyr662, and Tyr773.

The protein belongs to the protein kinase superfamily. Tyr protein kinase family. Fibroblast growth factor receptor subfamily. Ubiquitinated. Subject to proteasomal degradation when not fully glycosylated. Post-translationally, autophosphorylated. Binding of FGF family members together with heparan sulfate proteoglycan or heparin promotes receptor dimerization and autophosphorylation on tyrosine residues. Autophosphorylation occurs in trans between the two FGFR molecules present in the dimer.

It is found in the cell membrane. The protein resides in the endosome. The protein localises to the endoplasmic reticulum. It carries out the reaction L-tyrosyl-[protein] + ATP = O-phospho-L-tyrosyl-[protein] + ADP + H(+). Present in an inactive conformation in the absence of bound ligand. Ligand binding leads to dimerization and activation by autophosphorylation on tyrosine residues. Its function is as follows. Tyrosine-protein kinase that acts as a cell-surface receptor for fibroblast growth factors and plays a role in the regulation of cell proliferation, differentiation and migration, and in regulation of lipid metabolism, bile acid biosynthesis, glucose uptake, vitamin D metabolism and phosphate homeostasis. Required for normal down-regulation of the expression of CYP7A1, the rate-limiting enzyme in bile acid synthesis, in response to FGF19. Phosphorylates PLCG1 and FRS2. Ligand binding leads to the activation of several signaling cascades. Activation of PLCG1 leads to the production of the cellular signaling molecules diacylglycerol and inositol 1,4,5-trisphosphate. Phosphorylation of FRS2 triggers recruitment of GRB2, GAB1, PIK3R1 and SOS1, and mediates activation of RAS, MAPK1/ERK2, MAPK3/ERK1 and the MAP kinase signaling pathway, as well as of the AKT1 signaling pathway. This chain is Fibroblast growth factor receptor 4 (FGFR4), found in Pleurodeles waltl (Iberian ribbed newt).